A 689-amino-acid polypeptide reads, in one-letter code: Glycine--tRNA ligase beta subunit (689 aa).

Belongs to the class-II aminoacyl-tRNA synthetase family. Tetramer of two alpha and two beta subunits.

It localises to the cytoplasm. It carries out the reaction tRNA(Gly) + glycine + ATP = glycyl-tRNA(Gly) + AMP + diphosphate. The polypeptide is Glycine--tRNA ligase beta subunit (Aeromonas salmonicida (strain A449)).